The chain runs to 246 residues: TATA-box-binding protein (246 aa).

A disordered region spans residues 1-27 (MSSDKTSQQTFKLAPNNSVAQSNSIDQ). A run of 2 repeats spans residues 53–129 (LQNI…AKII) and 143–220 (IQNI…YWVL).

Belongs to the TBP family. As to quaternary structure, belongs to the TFIID complex together with the TBP-associated factors (TAFs). Binds DNA as monomer.

It localises to the nucleus. Its function is as follows. General transcription factor that functions at the core of the DNA-binding multiprotein factor TFIID. Binding of TFIID to the TATA box is the initial transcriptional step of the pre-initiation complex (PIC), playing a role in the activation of eukaryotic genes transcribed by RNA polymerase II. The polypeptide is TATA-box-binding protein (Tetrahymena thermophila).